The following is a 447-amino-acid chain: Imidazolonepropionase (447 aa).

Fe(3+) is bound by residues His85 and His87. His85 and His87 together coordinate Zn(2+). Positions 94, 157, and 190 each coordinate 4-imidazolone-5-propanoate. Tyr157 contacts N-formimidoyl-L-glutamate. His255 contacts Fe(3+). His255 provides a ligand contact to Zn(2+). 4-imidazolone-5-propanoate is bound at residue Glu258. Asp329 contributes to the Fe(3+) binding site. Asp329 serves as a coordination point for Zn(2+). Asn331 and Gly333 together coordinate N-formimidoyl-L-glutamate. 4-imidazolone-5-propanoate is bound at residue Ser334.

The protein belongs to the metallo-dependent hydrolases superfamily. HutI family. Zn(2+) is required as a cofactor. The cofactor is Fe(3+).

The protein resides in the cytoplasm. It catalyses the reaction 4-imidazolone-5-propanoate + H2O = N-formimidoyl-L-glutamate. It functions in the pathway amino-acid degradation; L-histidine degradation into L-glutamate; N-formimidoyl-L-glutamate from L-histidine: step 3/3. Its function is as follows. Catalyzes the hydrolytic cleavage of the carbon-nitrogen bond in imidazolone-5-propanoate to yield N-formimidoyl-L-glutamate. It is the third step in the universal histidine degradation pathway. The chain is Imidazolonepropionase from Shouchella clausii (strain KSM-K16) (Alkalihalobacillus clausii).